Consider the following 147-residue polypeptide: Riboflavin kinase (147 aa).

15 to 20 (GLGEGR) contributes to the CDP binding site. Positions 44 and 46 each coordinate Mg(2+). FMN-binding residues include threonine 97 and glutamate 104. 109–112 (TELR) is a CDP binding site.

Belongs to the archaeal riboflavin kinase family. Mg(2+) is required as a cofactor.

The enzyme catalyses riboflavin + CTP = CDP + FMN + H(+). The protein operates within cofactor biosynthesis; FMN biosynthesis; FMN from riboflavin (CTP route): step 1/1. Functionally, catalyzes the CTP-dependent phosphorylation of riboflavin (vitamin B2) to form flavin mononucleotide (FMN). The polypeptide is Riboflavin kinase (Methanopyrus kandleri (strain AV19 / DSM 6324 / JCM 9639 / NBRC 100938)).